Consider the following 176-residue polypeptide: Endoribonuclease YbeY (176 aa).

Zn(2+) contacts are provided by His138, His142, and His148.

Belongs to the endoribonuclease YbeY family. Zn(2+) serves as cofactor.

It localises to the cytoplasm. Its function is as follows. Single strand-specific metallo-endoribonuclease involved in late-stage 70S ribosome quality control and in maturation of the 3' terminus of the 16S rRNA. This Trichormus variabilis (strain ATCC 29413 / PCC 7937) (Anabaena variabilis) protein is Endoribonuclease YbeY.